Here is a 159-residue protein sequence, read N- to C-terminus: Calcium-binding protein CML39 (159 aa).

4 consecutive EF-hand domains span residues 18-53 (EKNR…LGEQ), 54-89 (MSDE…NDEF), 93-128 (EKKR…LGES), and 129-159 (RTTD…LMMR). Ca(2+)-binding residues include Asp-31, Asn-33, Asp-35, Arg-37, Glu-42, Asp-67, Asp-69, Asp-71, Met-73, and Glu-78. Residues Asp-142, Asn-144, Asp-146, and Glu-153 each contribute to the Ca(2+) site.

In terms of tissue distribution, expressed in the zones of elongation and differentiation in seedling roots and at the root-hypocotyl junction. Expressed from stage 12 of flower development in anthers, specifically in pollen.

In terms of biological role, potential calcium sensor that binds calcium in vitro. The polypeptide is Calcium-binding protein CML39 (CML39) (Arabidopsis thaliana (Mouse-ear cress)).